We begin with the raw amino-acid sequence, 426 residues long: L-ascorbate peroxidase T, chloroplastic (426 aa).

H112 serves as the catalytic Proton acceptor. H241 is a binding site for heme b. T242 provides a ligand contact to K(+). The disordered stretch occupies residues 245–269 (RARPDRSGWGKPETKYTKTGPGEAG). Residues 246-260 (ARPDRSGWGKPETKY) are compositionally biased toward basic and acidic residues. K(+) contacts are provided by T274 and D281. The helical transmembrane segment at 397–417 (YFLNIIIAIGVLVLLSTLFGG) threads the bilayer.

The protein belongs to the peroxidase family. Ascorbate peroxidase subfamily. Heme b is required as a cofactor.

It is found in the plastid. It localises to the chloroplast thylakoid membrane. It carries out the reaction L-ascorbate + H2O2 = L-dehydroascorbate + 2 H2O. In terms of biological role, plays a key role in hydrogen peroxide removal. This chain is L-ascorbate peroxidase T, chloroplastic (APXT), found in Arabidopsis thaliana (Mouse-ear cress).